Here is a 258-residue protein sequence, read N- to C-terminus: Aspartate/glutamate leucyltransferase (258 aa).

The protein belongs to the R-transferase family. Bpt subfamily.

It localises to the cytoplasm. It catalyses the reaction N-terminal L-glutamyl-[protein] + L-leucyl-tRNA(Leu) = N-terminal L-leucyl-L-glutamyl-[protein] + tRNA(Leu) + H(+). It carries out the reaction N-terminal L-aspartyl-[protein] + L-leucyl-tRNA(Leu) = N-terminal L-leucyl-L-aspartyl-[protein] + tRNA(Leu) + H(+). Functionally, functions in the N-end rule pathway of protein degradation where it conjugates Leu from its aminoacyl-tRNA to the N-termini of proteins containing an N-terminal aspartate or glutamate. This chain is Aspartate/glutamate leucyltransferase, found in Bradyrhizobium sp. (strain BTAi1 / ATCC BAA-1182).